A 93-amino-acid polypeptide reads, in one-letter code: YcgL domain-containing protein PSHAb0508 (93 aa).

In terms of domain architecture, YcgL spans 1–85 (MLTAVYKSKK…PQENLLSQLR (85 aa)).

The sequence is that of YcgL domain-containing protein PSHAb0508 from Pseudoalteromonas translucida (strain TAC 125).